Here is a 558-residue protein sequence, read N- to C-terminus: Urocanate hydratase (558 aa).

NAD(+) contacts are provided by residues 50–51 (GG), glutamine 128, 174–176 (GMG), glutamate 194, arginine 199, 240–241 (NA), 261–265 (QTSAH), 271–272 (YI), and tyrosine 320. The active site involves cysteine 408. Glycine 490 provides a ligand contact to NAD(+).

This sequence belongs to the urocanase family. NAD(+) is required as a cofactor.

The protein resides in the cytoplasm. The enzyme catalyses 4-imidazolone-5-propanoate = trans-urocanate + H2O. It participates in amino-acid degradation; L-histidine degradation into L-glutamate; N-formimidoyl-L-glutamate from L-histidine: step 2/3. Its function is as follows. Catalyzes the conversion of urocanate to 4-imidazolone-5-propionate. The chain is Urocanate hydratase from Deinococcus radiodurans (strain ATCC 13939 / DSM 20539 / JCM 16871 / CCUG 27074 / LMG 4051 / NBRC 15346 / NCIMB 9279 / VKM B-1422 / R1).